The sequence spans 696 residues: MGSWLSEVQWLFLVSLFVAALGTVGLYLAQWALAKARPPPRRRAEPDELRRRESDTLLSWILTRDSWGNQWQAAWVTALNYEAEKRGGPLRLSFQKDPRPQSLQLTVEKVSSVVKSTQEKVVICHVVGETLQFLVSAGPASATGSECQLYDVHLSPFHLKVEFHMEEKREDIQIRWSFTHVPETAIKIQPQAPGEKQALGVNMLSEALEDLFKHLVNAASPSVFLSTKPTQVKEAQSLQCPSSTAQEPCPPKPPRAHELKLQVKNIRVSLINHPGASGLSHVCVAQLNDPEQRFISTLVRNTTDLSWEEEFTFELNAKSKELVLQISQDGCSSEGLLGIATIHLDLFRKQPNGPQTFRLISGTEPDSLVLGSVTAEFSYVEPGELKSWPAPPPVSAAKIEKDRTVMPCGTVVTTVTAVKTKPRFDTGRATPLNSESPVRTPVTVKVIEKDISVQAISCHSAPVSKTFSSSDTELLVLNGSDPVAEVAIRQLSESSKLKLKSPRKKSTIIISGISKTSLSQDHNAALMLDYAASMDSTNQGDATSALCHPEATEASATTPPEENEPAQTLPALKPRENDLDSWELEKESPVASWSGPALQEPDGDELSESSLSTSELGAMKKHKGGLLRKGAKLFFRRRHQQKDPGLSQSHNDLVFLQQPEGRQKKGATLGRLLNRKLLTRHRGKHTMNGVPREPCI.

A helical transmembrane segment spans residues 8 to 28 (VQWLFLVSLFVAALGTVGLYL). The region spanning 45 to 238 (EPDELRRRES…PTQVKEAQSL (194 aa)) is the SMP-LBD domain. Residue S54 is modified to Phosphoserine. Positions 241–357 (PSSTAQEPCP…RKQPNGPQTF (117 aa)) constitute a C2 domain. S436 is modified (phosphoserine). T440 is subject to Phosphothreonine. The segment at 551–611 (ATEASATTPP…DGDELSESSL (61 aa)) is disordered. Positions 573 to 588 (KPRENDLDSWELEKES) are enriched in basic and acidic residues. Position 581 is a phosphoserine (S581).

It localises to the membrane. The protein is C2 domain-containing protein 2 of Mus musculus (Mouse).